The primary structure comprises 247 residues: Probable transcriptional regulatory protein PMT_1423 (247 aa).

Belongs to the TACO1 family.

Its subcellular location is the cytoplasm. The polypeptide is Probable transcriptional regulatory protein PMT_1423 (Prochlorococcus marinus (strain MIT 9313)).